The primary structure comprises 560 residues: Membrane protein insertase YidC (560 aa).

6 helical membrane passes run 5–25 (IINLIAAIILSLSIIFGWQYF), 334–354 (AIDFGWFYIITKPVFYAMNFF), 357–377 (YVGNFGVSILIVTVIIKLLMF), 431–451 (LPILVQIPVFFSIYKVLYVTI), 476–496 (LFGLLPFSPPLFLMIGAWPIL), and 522–542 (FMPLIFLFMFSSFPVGLLIYW).

Belongs to the OXA1/ALB3/YidC family. Type 1 subfamily. Interacts with the Sec translocase complex via SecD. Specifically interacts with transmembrane segments of nascent integral membrane proteins during membrane integration.

It is found in the cell inner membrane. Functionally, required for the insertion and/or proper folding and/or complex formation of integral membrane proteins into the membrane. Involved in integration of membrane proteins that insert both dependently and independently of the Sec translocase complex, as well as at least some lipoproteins. Aids folding of multispanning membrane proteins. The sequence is that of Membrane protein insertase YidC from Rickettsia africae (strain ESF-5).